Consider the following 625-residue polypeptide: Probable inactive receptor kinase At5g16590 (625 aa).

Residues 1 to 23 form the signal peptide; sequence MKNKTNLGLSVFFFFICLVSVTS. 5 LRR repeats span residues 88-111, 112-134, 136-158, 160-182, and 183-204; these read KLETLSFRFNALNGPLPPDFANLT, LLRYLYLQGNAFSGEIPSFLFTL, NIIRINLAQNNFLGRIPDNVNSA, RLATLYLQDNQLTGPIPEIKIKL, and QQFNVSSNQLNGSIPDPLSGMP. A helical transmembrane segment spans residues 246–266; it reads AIVGIVIGCFVLLLVLFLIVF. One can recognise a Protein kinase domain in the interval 343–613; the sequence is KASAEVLGKG…PEVTRLIEEV (271 aa). Residue Ser345 is modified to Phosphoserine. ATP is bound by residues 349–357 and Lys371; that span reads LGKGTFGSS. Ser422 bears the Phosphoserine mark. Phosphothreonine occurs at positions 442 and 496. The residue at position 517 (Ser517) is a Phosphoserine. A Phosphothreonine modification is found at Thr593. 2 positions are modified to phosphoserine: Ser619 and Ser624.

This sequence belongs to the protein kinase superfamily. Ser/Thr protein kinase family.

It localises to the cell membrane. In terms of biological role, might be involved in early recognition of growth promoting fungi. Appears to be specific for P.indica. In Arabidopsis thaliana (Mouse-ear cress), this protein is Probable inactive receptor kinase At5g16590.